The primary structure comprises 202 residues: Secreted RxLR effector protein 93 (202 aa).

An N-terminal signal peptide occupies residues 1–16 (MRFYLTKLFAAAGALA). Positions 29 to 58 (TPVSPLSRSSDHHQSDDSTQRRLRTLNGAD) are disordered. Basic and acidic residues predominate over residues 37–48 (SSDHHQSDDSTQ). A RxLR-dEER motif is present at residues 49–61 (RRLRTLNGADEER).

It belongs to the RxLR effector family.

The protein resides in the secreted. The protein localises to the host nucleus. Secreted effector that completely suppresses the host cell death induced by cell death-inducing proteins. The chain is Secreted RxLR effector protein 93 from Plasmopara viticola (Downy mildew of grapevine).